The following is an 83-amino-acid chain: Large ribosomal subunit protein bL27 (83 aa).

This sequence belongs to the bacterial ribosomal protein bL27 family.

The protein is Large ribosomal subunit protein bL27 of Thermotoga neapolitana (strain ATCC 49049 / DSM 4359 / NBRC 107923 / NS-E).